Consider the following 469-residue polypeptide: Glutamine synthetase (469 aa).

Residues 15-96 (NDVKFIDVRF…INFFIHDPIT (82 aa)) form the GS beta-grasp domain. Residues 104-469 (PRNIAKKAEA…PHEFELYFDI (366 aa)) enclose the GS catalytic domain. Positions 129 and 131 each coordinate Mg(2+). Residue glutamate 205 participates in ATP binding. Residues glutamate 210 and glutamate 218 each coordinate Mg(2+). 221-223 (YKF) contacts ATP. L-glutamate is bound by residues 262–263 (NG) and glycine 263. Histidine 267 is a binding site for Mg(2+). ATP is bound by residues 269–271 (HQS) and serine 271. L-glutamate contacts are provided by arginine 320, glutamate 326, and arginine 338. Residues arginine 338, arginine 343, and lysine 352 each contribute to the ATP site. Glutamate 357 lines the Mg(2+) pocket. Arginine 359 contacts L-glutamate. Tyrosine 397 bears the O-AMP-tyrosine mark.

This sequence belongs to the glutamine synthetase family. In terms of assembly, oligomer of 12 subunits arranged in the form of two hexagons. Mg(2+) serves as cofactor.

The protein localises to the cytoplasm. It carries out the reaction L-glutamate + NH4(+) + ATP = L-glutamine + ADP + phosphate + H(+). Its activity is regulated as follows. The activity of this enzyme could be controlled by adenylation under conditions of abundant glutamine. Its function is as follows. Catalyzes the ATP-dependent biosynthesis of glutamine from glutamate and ammonia. The chain is Glutamine synthetase from Streptomyces filamentosus (Streptomyces roseosporus).